Here is a 371-residue protein sequence, read N- to C-terminus: Tetraacyldisaccharide 4'-kinase (371 aa).

An ATP-binding site is contributed by 48–55; it reads SAGGTGKT.

Belongs to the LpxK family.

It carries out the reaction a lipid A disaccharide + ATP = a lipid IVA + ADP + H(+). It functions in the pathway glycolipid biosynthesis; lipid IV(A) biosynthesis; lipid IV(A) from (3R)-3-hydroxytetradecanoyl-[acyl-carrier-protein] and UDP-N-acetyl-alpha-D-glucosamine: step 6/6. Transfers the gamma-phosphate of ATP to the 4'-position of a tetraacyldisaccharide 1-phosphate intermediate (termed DS-1-P) to form tetraacyldisaccharide 1,4'-bis-phosphate (lipid IVA). This chain is Tetraacyldisaccharide 4'-kinase, found in Chlorobium chlorochromatii (strain CaD3).